The chain runs to 194 residues: Isopentenyl-diphosphate Delta-isomerase (194 aa).

Positions 23 and 30 each coordinate Mn(2+). The Nudix hydrolase domain occupies 28–162 (PLHLAFSCYV…TTDISPWCRQ (135 aa)). The active site involves Cys-65. Position 67 (His-67) interacts with Mn(2+). Mg(2+) is bound at residue Glu-85. Glu-112 and Glu-114 together coordinate Mn(2+). Residue Glu-114 is part of the active site.

The protein belongs to the IPP isomerase type 1 family. Mg(2+) serves as cofactor. The cofactor is Mn(2+).

It is found in the cytoplasm. The enzyme catalyses isopentenyl diphosphate = dimethylallyl diphosphate. Its pathway is isoprenoid biosynthesis; dimethylallyl diphosphate biosynthesis; dimethylallyl diphosphate from isopentenyl diphosphate: step 1/1. Its function is as follows. Catalyzes the 1,3-allylic rearrangement of the homoallylic substrate isopentenyl (IPP) to its highly electrophilic allylic isomer, dimethylallyl diphosphate (DMAPP). The sequence is that of Isopentenyl-diphosphate Delta-isomerase from Saccharopolyspora erythraea (strain ATCC 11635 / DSM 40517 / JCM 4748 / NBRC 13426 / NCIMB 8594 / NRRL 2338).